An 891-amino-acid polypeptide reads, in one-letter code: Major core protein OPG136 precursor (891 aa).

The propeptide occupies 615-697 (SPEGEETIIC…ILDRIITNAG (83 aa)).

This sequence belongs to the orthopxvirus protein OPG136 family. As to quaternary structure, interacts with P39/A4. The precursor is cleaved by OPG083 to give rise to the 62 kDa mature protein during virion maturation. Proteolytic cleavage of major core proteins OPG136, OPG129, and OPG098, which occurs at a late stage of core formation, is required for production of infectious mature virions (MV).

Its subcellular location is the virion. Its function is as follows. Core protein 4a is the most abundant virion protein. Major component of the virion core that undergoes proteolytic processing during the immature virion (IV) to mature virion (MV) transition. This is Major core protein OPG136 precursor (OPG136) from Cynomys gunnisoni (Gunnison's prairie dog).